Reading from the N-terminus, the 362-residue chain is Sulfoquinovose monooxygenase (362 aa).

It belongs to the SsuD family.

It catalyses the reaction 6-sulfo-D-quinovose + FMNH2 + O2 = 6-dehydro-D-glucose + FMN + sulfite + H2O + 2 H(+). Part of the alkanesulfonate monooxygenase (sulfo-ASMO) pathway, a D-sulfoquinovose degradation pathway that enables the complete utilization of all carbons within sulfoquinovose (SQ) with concomitant production of inorganic sulfite. Catalyzes the oxidative desulfurization of sulfoquinovose to sulfite and 6-dehydro-D-glucose. The sequence is that of Sulfoquinovose monooxygenase from Novosphingobium aromaticivorans (strain ATCC 700278 / DSM 12444 / CCUG 56034 / CIP 105152 / NBRC 16084 / F199).